We begin with the raw amino-acid sequence, 185 residues long: Elongation factor P (185 aa).

This sequence belongs to the elongation factor P family.

It is found in the cytoplasm. It participates in protein biosynthesis; polypeptide chain elongation. Its function is as follows. Involved in peptide bond synthesis. Stimulates efficient translation and peptide-bond synthesis on native or reconstituted 70S ribosomes in vitro. Probably functions indirectly by altering the affinity of the ribosome for aminoacyl-tRNA, thus increasing their reactivity as acceptors for peptidyl transferase. This Dictyoglomus turgidum (strain DSM 6724 / Z-1310) protein is Elongation factor P.